The chain runs to 293 residues: Ribosomal protein L11 methyltransferase (293 aa).

Positions 145, 166, 188, and 230 each coordinate S-adenosyl-L-methionine.

This sequence belongs to the methyltransferase superfamily. PrmA family.

The protein resides in the cytoplasm. It catalyses the reaction L-lysyl-[protein] + 3 S-adenosyl-L-methionine = N(6),N(6),N(6)-trimethyl-L-lysyl-[protein] + 3 S-adenosyl-L-homocysteine + 3 H(+). Its function is as follows. Methylates ribosomal protein L11. The protein is Ribosomal protein L11 methyltransferase of Escherichia coli O81 (strain ED1a).